We begin with the raw amino-acid sequence, 496 residues long: Genome polyprotein (496 aa).

Over 1–447 the chain is Extracellular; that stretch reads SRCTHLENRD…HTVLGGAFNS (447 aa). 6 disulfides stabilise this stretch: cysteine 3/cysteine 30, cysteine 60/cysteine 116, cysteine 60/cysteine 121, cysteine 74/cysteine 105, cysteine 92/cysteine 116, and cysteine 92/cysteine 121. The interval 98–111 is fusion peptide; the sequence is DRGWGNHCGLFGKG. Residue asparagine 154 is glycosylated (N-linked (GlcNAc...) asparagine; by host). Cystine bridges form between cysteine 186-cysteine 290 and cysteine 307-cysteine 338. Residues 448–468 traverse the membrane as a helical segment; sequence IFGGVGFLPKLLMGVALAWLG. The Cytoplasmic portion of the chain corresponds to 469–479; it reads LNTRNPTMSMS. The chain crosses the membrane as a helical span at residues 480 to 496; it reads FLLAGGLVLAMTLGVGA.

As to quaternary structure, homodimer; in the endoplasmic reticulum and Golgi. Post-translationally, N-glycosylated.

Its subcellular location is the virion membrane. The protein resides in the host endoplasmic reticulum membrane. Functionally, binds to host cell surface receptor and mediates fusion between viral and cellular membranes. Envelope protein is synthesized in the endoplasmic reticulum in the form of heterodimer with protein prM. They play a role in virion budding in the ER, and the newly formed immature particle is covered with 60 spikes composed of heterodimer between precursor prM and envelope protein E. The virion is transported to the Golgi apparatus where the low pH causes dissociation of PrM-E heterodimers and formation of E homodimers. prM-E cleavage is ineficient, and many virions are only partially matured. These uncleaved prM would play a role in immune evasion. The sequence is that of Genome polyprotein from Louping ill virus (strain Negishi 3248/49/P10) (Li).